Reading from the N-terminus, the 401-residue chain is Argininosuccinate synthase (401 aa).

8 to 16 serves as a coordination point for ATP; that stretch reads AYSGGLDTS. Tyr85 serves as a coordination point for L-citrulline. Gly115 serves as a coordination point for ATP. Residues Thr117, Asn121, and Asp122 each coordinate L-aspartate. Residue Asn121 coordinates L-citrulline. Arg125, Ser173, Glu258, and Tyr270 together coordinate L-citrulline.

This sequence belongs to the argininosuccinate synthase family. Type 1 subfamily. As to quaternary structure, homotetramer.

Its subcellular location is the cytoplasm. The catalysed reaction is L-citrulline + L-aspartate + ATP = 2-(N(omega)-L-arginino)succinate + AMP + diphosphate + H(+). The protein operates within amino-acid biosynthesis; L-arginine biosynthesis; L-arginine from L-ornithine and carbamoyl phosphate: step 2/3. The sequence is that of Argininosuccinate synthase from Staphylococcus aureus (strain Mu3 / ATCC 700698).